The sequence spans 144 residues: 3-hydroxyacyl-[acyl-carrier-protein] dehydratase FabZ (144 aa).

Residue H47 is part of the active site.

This sequence belongs to the thioester dehydratase family. FabZ subfamily.

The protein resides in the cytoplasm. It catalyses the reaction a (3R)-hydroxyacyl-[ACP] = a (2E)-enoyl-[ACP] + H2O. Its function is as follows. Involved in unsaturated fatty acids biosynthesis. Catalyzes the dehydration of short chain beta-hydroxyacyl-ACPs and long chain saturated and unsaturated beta-hydroxyacyl-ACPs. The chain is 3-hydroxyacyl-[acyl-carrier-protein] dehydratase FabZ from Nitrosomonas eutropha (strain DSM 101675 / C91 / Nm57).